The following is a 154-amino-acid chain: Pro-corazonin (154 aa).

An N-terminal signal peptide occupies residues Met-1–Gly-19. The residue at position 20 (Gln-20) is a Pyrrolidone carboxylic acid. The residue at position 30 (Asn-30) is an Asparagine amide. Positions Leu-70–His-154 are excised as a propeptide. The disordered stretch occupies residues Asp-91 to Tyr-119. Polar residues predominate over residues Leu-109–Tyr-119.

Belongs to the corazonin family. As to expression, from late embryo to larva, expression is consistently detected in three neuronal groups: dorso-lateral neurons (DL), dorso-medial neurons (DM), and neurons in the ventral nerve cord (vCrz). Both the vCrz and DM groups die via programmed cell death during metamorphosis, whereas the DL neurons persist to adulthood. In adults, expression is seen in a cluster of six to eight neurons per lobe in the pars lateralis (DLP), in numerous neuronal cells in the optic lobes, and in a novel group of four abdominal ganglionic neurons present only in males (ms-aCrz). Projections of the ms-aCrz neurons terminate within the ventral nerve cord, implying a role as interneurons. Terminals of the DLP neurons are found in the retrocerebral complex that produces juvenile hormone and adipokinetic hormone, located in the vicinity of terminals emanating from PDF-containing pacemaking neurons.

It localises to the secreted. Its function is as follows. Cardioactive peptide. Corazonin is probably involved in the physiological regulation of the heart beat. Clock (Clk) and cycle (cyc) proteins negatively regulate Crz transcription in a cell-specific manner. This Drosophila melanogaster (Fruit fly) protein is Pro-corazonin (Crz).